Here is a 94-residue protein sequence, read N- to C-terminus: Co-chaperonin GroES (94 aa).

This sequence belongs to the GroES chaperonin family. Heptamer of 7 subunits arranged in a ring. Interacts with the chaperonin GroEL.

Its subcellular location is the cytoplasm. In terms of biological role, together with the chaperonin GroEL, plays an essential role in assisting protein folding. The GroEL-GroES system forms a nano-cage that allows encapsulation of the non-native substrate proteins and provides a physical environment optimized to promote and accelerate protein folding. GroES binds to the apical surface of the GroEL ring, thereby capping the opening of the GroEL channel. This Lactobacillus helveticus (strain DPC 4571) protein is Co-chaperonin GroES.